The sequence spans 450 residues: MDLKGKKIVAVGLALTGEAVAAFCLDKGASVTVADIASETSLGARVQNVRDMGAQVELGPHNMETFTQADLIVISPGVPHTIPVLEAAREKGVPVIGEVELASRFIQAPIIAVTGTNGKTTVTSLIGEMMEASGISAFVGGNIGNPLVNYAKGEDKAQVVVAEISSFQLDTIESFAPKVALLTNVTEDHMDRYDGMEGYAASKARVFMNQTGADFAILNGCDKWSRAMCGGIKASQWFFTGREEAEAGIAMNAGAMDFFTGAQKHWSLSLKKMTLSGEHNKENAAAAALAAYAAGASVEGIQGAIDAFKGLPHRLEFVREVMDVKYYDDSKATNVDAVLRALEGFNAPVHLIMGGRDKGGHFRDLKDMVEQKAARLYVTGEAAGIITSALSGSVEVVQAGTIEKAVEFAKRAARPGEVVVLSPGCASFDQYKNYKERGKDFCRVVNALPA.

115 to 121 (GTNGKTT) contacts ATP.

Belongs to the MurCDEF family.

The protein localises to the cytoplasm. It catalyses the reaction UDP-N-acetyl-alpha-D-muramoyl-L-alanine + D-glutamate + ATP = UDP-N-acetyl-alpha-D-muramoyl-L-alanyl-D-glutamate + ADP + phosphate + H(+). Its pathway is cell wall biogenesis; peptidoglycan biosynthesis. Its function is as follows. Cell wall formation. Catalyzes the addition of glutamate to the nucleotide precursor UDP-N-acetylmuramoyl-L-alanine (UMA). In Desulfatibacillum aliphaticivorans, this protein is UDP-N-acetylmuramoylalanine--D-glutamate ligase.